A 454-amino-acid chain; its full sequence is Chromosomal replication initiator protein DnaA (454 aa).

The interval methionine 1 to glutamate 80 is domain I, interacts with DnaA modulators. The domain II stretch occupies residues glutamate 80–serine 117. A domain III, AAA+ region region spans residues histidine 118 to glutamine 335. Positions 163, 165, 166, and 167 each coordinate ATP. The domain IV, binds dsDNA stretch occupies residues aspartate 336–alanine 454.

Belongs to the DnaA family. As to quaternary structure, oligomerizes as a right-handed, spiral filament on DNA at oriC.

The protein resides in the cytoplasm. Its function is as follows. Plays an essential role in the initiation and regulation of chromosomal replication. ATP-DnaA binds to the origin of replication (oriC) to initiate formation of the DNA replication initiation complex once per cell cycle. Binds the DnaA box (a 9 base pair repeat at the origin) and separates the double-stranded (ds)DNA. Forms a right-handed helical filament on oriC DNA; dsDNA binds to the exterior of the filament while single-stranded (ss)DNA is stabiized in the filament's interior. The ATP-DnaA-oriC complex binds and stabilizes one strand of the AT-rich DNA unwinding element (DUE), permitting loading of DNA polymerase. After initiation quickly degrades to an ADP-DnaA complex that is not apt for DNA replication. Binds acidic phospholipids. The protein is Chromosomal replication initiator protein DnaA of Haemophilus influenzae (strain ATCC 51907 / DSM 11121 / KW20 / Rd).